We begin with the raw amino-acid sequence, 179 residues long: Ribosome maturation factor RimM (179 aa).

Residues 100-176 (KEEFHLLELI…FLIINPPNGL (77 aa)) form the PRC barrel domain.

Belongs to the RimM family. Binds ribosomal protein uS19.

The protein resides in the cytoplasm. An accessory protein needed during the final step in the assembly of 30S ribosomal subunit, possibly for assembly of the head region. Essential for efficient processing of 16S rRNA. May be needed both before and after RbfA during the maturation of 16S rRNA. It has affinity for free ribosomal 30S subunits but not for 70S ribosomes. The chain is Ribosome maturation factor RimM from Prochlorococcus marinus (strain AS9601).